A 463-amino-acid polypeptide reads, in one-letter code: ATP-dependent protease ATPase subunit HslU (463 aa).

Residues isoleucine 19, 61 to 66 (GVGKTE), aspartate 277, glutamate 341, and arginine 413 each bind ATP.

This sequence belongs to the ClpX chaperone family. HslU subfamily. A double ring-shaped homohexamer of HslV is capped on each side by a ring-shaped HslU homohexamer. The assembly of the HslU/HslV complex is dependent on binding of ATP.

It is found in the cytoplasm. Functionally, ATPase subunit of a proteasome-like degradation complex; this subunit has chaperone activity. The binding of ATP and its subsequent hydrolysis by HslU are essential for unfolding of protein substrates subsequently hydrolyzed by HslV. HslU recognizes the N-terminal part of its protein substrates and unfolds these before they are guided to HslV for hydrolysis. The sequence is that of ATP-dependent protease ATPase subunit HslU from Bacillus cereus (strain ATCC 14579 / DSM 31 / CCUG 7414 / JCM 2152 / NBRC 15305 / NCIMB 9373 / NCTC 2599 / NRRL B-3711).